Here is a 371-residue protein sequence, read N- to C-terminus: DNA replication and repair protein RecF (371 aa).

30–37 (GENAQGKT) is an ATP binding site.

Belongs to the RecF family.

Its subcellular location is the cytoplasm. Functionally, the RecF protein is involved in DNA metabolism; it is required for DNA replication and normal SOS inducibility. RecF binds preferentially to single-stranded, linear DNA. It also seems to bind ATP. This Staphylococcus haemolyticus (strain JCSC1435) protein is DNA replication and repair protein RecF.